The sequence spans 130 residues: Small ribosomal subunit protein uS8 (130 aa).

This sequence belongs to the universal ribosomal protein uS8 family. Part of the 30S ribosomal subunit. Contacts proteins S5 and S12.

Functionally, one of the primary rRNA binding proteins, it binds directly to 16S rRNA central domain where it helps coordinate assembly of the platform of the 30S subunit. In Vibrio parahaemolyticus serotype O3:K6 (strain RIMD 2210633), this protein is Small ribosomal subunit protein uS8.